The following is a 1002-amino-acid chain: Probable transport protein MmpL10 (1002 aa).

Transmembrane regions (helical) follow at residues 1–21 (MVGC…SLAE), 177–197 (IAVM…TMLL), 199–219 (LVTI…VSLV), 228–248 (AIVL…VFLI), 268–288 (AMMS…ITFL), 306–326 (AIGI…ILVL), 358–378 (YLGA…LAHF), 806–826 (IVAV…RAIV), 835–855 (VVIS…VFLG), 862–882 (VPGL…MLLA), 901–921 (VRCT…SMSG), and 923–943 (LFSS…GILI).

This sequence belongs to the resistance-nodulation-cell division (RND) (TC 2.A.6) family. MmpL subfamily.

Its subcellular location is the cell membrane. The protein is Probable transport protein MmpL10 (mmpL10) of Mycobacterium bovis (strain ATCC BAA-935 / AF2122/97).